Here is a 375-residue protein sequence, read N- to C-terminus: 23S rRNA (uracil(747)-C(5))-methyltransferase RlmC (375 aa).

4 residues coordinate [4Fe-4S] cluster: C3, C11, C14, and C87. 4 residues coordinate S-adenosyl-L-methionine: Q212, F241, E262, and N307. Catalysis depends on C334, which acts as the Nucleophile.

This sequence belongs to the class I-like SAM-binding methyltransferase superfamily. RNA M5U methyltransferase family. RlmC subfamily.

The catalysed reaction is uridine(747) in 23S rRNA + S-adenosyl-L-methionine = 5-methyluridine(747) in 23S rRNA + S-adenosyl-L-homocysteine + H(+). Functionally, catalyzes the formation of 5-methyl-uridine at position 747 (m5U747) in 23S rRNA. This Escherichia coli O139:H28 (strain E24377A / ETEC) protein is 23S rRNA (uracil(747)-C(5))-methyltransferase RlmC.